The following is a 198-amino-acid chain: Probable GTP-binding protein EngB (198 aa).

An EngB-type G domain is found at 22-195; sequence NRVEVAFVGR…IDNLFLEFAT (174 aa). GTP-binding positions include 30–37, 57–61, 75–78, 142–145, and 174–176; these read GRSNVGKS, GKTRL, DLPG, TKSD, and FSS. The Mg(2+) site is built by Ser37 and Thr59.

It belongs to the TRAFAC class TrmE-Era-EngA-EngB-Septin-like GTPase superfamily. EngB GTPase family. It depends on Mg(2+) as a cofactor.

Necessary for normal cell division and for the maintenance of normal septation. The sequence is that of Probable GTP-binding protein EngB from Clostridium beijerinckii (strain ATCC 51743 / NCIMB 8052) (Clostridium acetobutylicum).